The following is an 805-amino-acid chain: G-type lectin S-receptor-like serine/threonine-protein kinase SD1-29 (805 aa).

An N-terminal signal peptide occupies residues 1 to 21 (MGMVLFACLLLLIIFPTCGYA). In terms of domain architecture, Bulb-type lectin spans 22-141 (AINTSSPLSI…VSGNKLWQSF (120 aa)). Residues 22 to 428 (AINTSSPLSI…SELAGSSRRK (407 aa)) lie on the Extracellular side of the membrane. Asn24, Asn50, Asn85, Asn91, and Asn248 each carry an N-linked (GlcNAc...) asparagine glycan. Residues 277–313 (PENPCDLYGRCGPYGLCVRSDPPKCECLKGFVPKSDE) enclose the EGF-like domain. 2 disulfide bridges follow: Cys281–Cys293 and Cys287–Cys301. Residues Asn319 and Asn378 are each glycosylated (N-linked (GlcNAc...) asparagine). One can recognise a PAN domain in the interval 332 to 418 (CQAKSSMKTQ…GEFLFIRLAS (87 aa)). Disulfide bonds link Cys371–Cys392 and Cys375–Cys381. A helical transmembrane segment spans residues 429–449 (IIVGTTVSLSIFLILVFAAIM). Over 450–805 (LWRYRAKQND…EMTESMIQGR (356 aa)) the chain is Cytoplasmic. In terms of domain architecture, Protein kinase spans 488 to 773 (FSPSNKLGQG…DLPVPKQPIF (286 aa)). ATP-binding positions include 494 to 502 (LGQGGFGPV) and Lys516. Phosphoserine is present on residues Ser522 and Ser537. A caM-binding region spans residues 577 to 594 (CLKFELDWPKRFNIIQGI). Phosphotyrosine is present on Tyr600. Asp613 (proton acceptor) is an active-site residue. Ser617 and Ser630 each carry phosphoserine. Thr647 carries the phosphothreonine modification. Phosphoserine occurs at positions 690 and 793.

This sequence belongs to the protein kinase superfamily. Ser/Thr protein kinase family. In terms of assembly, interacts with PUB9, PUB13, PUB14, PUB29, PUB38, PUB44 and PUB45. Interacts with PBL34, PBL35 and PBL36. In terms of processing, autophosphorylated at Tyr-600. Autophosphorylation at Tyr-600 is required for downstream phosphorylation of the receptor-like cytoplasmic kinase PBL34, PBL35 and PBL36, and activation of plant immunity.

The protein localises to the cell membrane. The enzyme catalyses L-seryl-[protein] + ATP = O-phospho-L-seryl-[protein] + ADP + H(+). It catalyses the reaction L-threonyl-[protein] + ATP = O-phospho-L-threonyl-[protein] + ADP + H(+). The catalysed reaction is L-tyrosyl-[protein] + ATP = O-phospho-L-tyrosyl-[protein] + ADP + H(+). In terms of biological role, S-domain receptor protein kinase involved in lipopolysaccharide (LPS) sensing. Specifically detects LPS of Pseudomonas and Xanthomonas species. LPS are major components of the outer membrane of Gram-negative bacteria and are important microbe-associated molecular patterns (MAMPs) that trigger biphasic production of reactive oxygen species (ROS) and immune responses in plants. Seems to be only partially associated with the second LPS-triggered ROS burst. Mediates defense signaling in response to the medium-chain 3-hydroxy fatty acid 3-OH-C10:0, a pathogen-associated molecular pattern (PAMP) which induces autophosphorylation at Tyr-600. Autophosphorylation at Tyr-600 is required for downstream phosphorylation of the receptor-like cytoplasmic kinase PBL34, PBL35 and PBL36, and activation of plant immunity. Its function is as follows. (Microbial infection) Targeted by the bacterial type III effector protein tyrosine phosphatase HopAO1 from Pseudomonas syringae. HopAO1 dephosphorylates Tyr-600, which suppresses the immune response. In Arabidopsis thaliana (Mouse-ear cress), this protein is G-type lectin S-receptor-like serine/threonine-protein kinase SD1-29.